The sequence spans 176 residues: Ribosome maturation factor RimM (176 aa).

One can recognise a PRC barrel domain in the interval 100–173 (PGEFHLLDLL…WLMVCPPPGL (74 aa)).

Belongs to the RimM family. Binds ribosomal protein uS19.

The protein resides in the cytoplasm. Its function is as follows. An accessory protein needed during the final step in the assembly of 30S ribosomal subunit, possibly for assembly of the head region. Essential for efficient processing of 16S rRNA. May be needed both before and after RbfA during the maturation of 16S rRNA. It has affinity for free ribosomal 30S subunits but not for 70S ribosomes. This chain is Ribosome maturation factor RimM, found in Prochlorococcus marinus (strain SARG / CCMP1375 / SS120).